A 287-amino-acid polypeptide reads, in one-letter code: Lactamase-like protein nscB (287 aa).

Residues histidine 62, histidine 64, aspartate 66, and histidine 67 each contribute to the Zn(2+) site. The Proton donor/acceptor role is filled by aspartate 66.

Belongs to the metallo-beta-lactamase superfamily. Zn(2+) serves as cofactor.

Its pathway is secondary metabolite biosynthesis. In terms of biological role, lactamase-like protein; part of the gene cluster that mediates the biosynthesis of neosartoricin B, a prenylated anthracenone that probably exhibits T-cell antiproliferative activity, suggestive of a physiological role as an immunosuppressive agent. The non-reducing polyketide synthase nscA probably synthesizes and cyclizes the decaketide backbone. The hydrolase nscB then mediates the product release through hydrolysis followed by spontaneous decarboxylation. The prenyltransferase nscD catalyzes the addition of the dimethylallyl group to the aromatic C5. The FAD-dependent monooxygenase nscC is then responsible for the stereospecific hydroxylation at C2. Neosartoricin B can be converted into two additional compounds neosartoricins C and D. Neosartoricin C is a spirocyclic compound that is cyclized through the attack of C3 hydroxyl on C14, followed by dehydration. On the other hand, neosartoricin D is a further cyclized compound in which attack of C2 on C14 in neosartoricin C results in the formation of the acetal-containing dioxabicyclo-octanone ring. Both of these compounds are novel and possibly represent related metabolites of the gene cluster. The polypeptide is Lactamase-like protein nscB (Trichophyton verrucosum (strain HKI 0517)).